Here is a 551-residue protein sequence, read N- to C-terminus: Cytochrome P450 monooxygenase virE (551 aa).

The signal sequence occupies residues 1 to 25 (MPKPWVVFGLGTLVLFLWRLNKIGR). A glycan (N-linked (GlcNAc...) asparagine) is linked at N392. A heme-binding site is contributed by C439.

Belongs to the cytochrome P450 family. Heme serves as cofactor.

It functions in the pathway secondary metabolite biosynthesis. Functionally, cytochrome P450 monooxygenase; part of the gene cluster that mediates the biosynthesis of virensols and trichoxide, fungal natural products that contain or are derived from a salicylaldehyde core. The pathway begins with the synthesis of the reduced chain in virensol C by the highly reducing polyketide synthase virA via condensation of one acetate and 8 malonate units. VirA has interesting programming rules since the first 2 ketides are fully reduced, the 3 following ketides undergo beta-dehydration, and the last 3 ketides are only reduced to beta-hydroxys to yield the trihydroxy portion. The production of aldehyde virensol C by virA alone is surprising, since virA does not contain a reductase (R) domain that is typically associated with reductive product release in HRPKS. The cupin-domain enzyme virC is involved in enhancing virA product turnover. The short-chain dehydrogenase virB then oxidizes the C-7 alcohol of virensol C to a ketone, yielding virensol D. Virensol D is further transformed to salicylaldehyde 5-deoxyaurocitrin by the short-chain dehydrogenase virD. VirD catalyzes the dehydrogenation of C-3 to form the beta-ketone aldehyde, which is followed by the generation of the nucleophilic C-2 that is required for the intramolecular aldol condensation between C-2 and C-7, itself followed by dehydration and aromatization which leads to salicylaldehyde 5-deoxyaurocitrin. While the dehydrogenation of virensol D is definitely catalyzed by virD, the aldol condensation and dehydration may be uncatalyzed or assisted by virD. The short chain dehydrogenase virG then converts salicylaldehyde 5-deoxyaurocitrin into virensol B which is further hydroxylated by the cytochrome P450 monooxygenase virE to yield the hydroquinone virensol A. VirI then may oxidize virensol A to form the quinone, while virH performs the epoxidation. Finally, the two remaining short-chain dehydrogenases, virK and virL, are probably responsible for reducing the ketones to the corresponding alcohols to furnish the epoxycyclohexanol structure in trichoxide. This Hypocrea virens (strain Gv29-8 / FGSC 10586) (Gliocladium virens) protein is Cytochrome P450 monooxygenase virE.